Consider the following 269-residue polypeptide: Eukaryotic translation initiation factor 3 subunit G-1 (269 aa).

The 79-residue stretch at Ala-188–Pro-266 folds into the RRM domain.

Belongs to the eIF-3 subunit G family. Component of the eukaryotic translation initiation factor 3 (eIF-3) complex. The eIF-3 complex interacts with pix.

It localises to the cytoplasm. Functionally, RNA-binding component of the eukaryotic translation initiation factor 3 (eIF-3) complex, which is involved in protein synthesis of a specialized repertoire of mRNAs and, together with other initiation factors, stimulates binding of mRNA and methionyl-tRNAi to the 40S ribosome. The eIF-3 complex specifically targets and initiates translation of a subset of mRNAs involved in cell proliferation. This subunit can bind 18S rRNA. The chain is Eukaryotic translation initiation factor 3 subunit G-1 from Drosophila grimshawi (Hawaiian fruit fly).